The following is an 80-amino-acid chain: Cytochrome c oxidase subunit 7A1, mitochondrial (80 aa).

Residues 1–21 (MRALRVSQALVRSFSSSTRSH) constitute a mitochondrion transit peptide. Over 22–46 (LENRVAEKQKLFQADNDLPVHLKGG) the chain is Mitochondrial matrix. Residues 47-75 (GMDNVLYRLTMTLTLGGTAYCLYCLGWAS) form a helical membrane-spanning segment. Residues 76–80 (FPHKK) lie on the Mitochondrial intermembrane side of the membrane.

It belongs to the cytochrome c oxidase VIIa family. Component of the complex IV (CIV, cytochrome c oxidase), a multisubunit enzyme composed of 14 subunits. The complex is composed of a catalytic core of 3 subunits MT-CO1, MT-CO2 and MT-CO3, encoded in the mitochondrial DNA, and 11 supernumerary subunits COX4I, COX5A, COX5B, COX6A, COX6B, COX6C, COX7A, COX7B, COX7C, COX8 and NDUFA4, which are encoded in the nuclear genome. The complex exists as a monomer or a dimer and forms supercomplexes (SCs) in the inner mitochondrial membrane with NADH-ubiquinone oxidoreductase (complex I, CI) and ubiquinol-cytochrome c oxidoreductase (cytochrome b-c1 complex, complex III, CIII), resulting in different assemblies (supercomplex SCI(1)III(2)IV(1) and megacomplex MCI(2)III(2)IV(2)).

It localises to the mitochondrion inner membrane. It participates in energy metabolism; oxidative phosphorylation. Functionally, component of the mitochondrial respiratory complex IV (CIV, also named cytochrome c oxidase complex), the last enzyme in the mitochondrial electron transport chain which drives oxidative phosphorylation. The CIV complex is the component of the respiratory chain that catalyzes the reduction of oxygen to water. Acts as an assembly factor that specifically drives the homodimerization of CIV complexes, mediating the formation of mitochondrial respiratory supercomplexes (respirasomes) containing two CIV: supercomplxes with two molecules of CIV show improved activity. Despite being highly expressed in brown adipose tissue, not required for thermogenesis. The chain is Cytochrome c oxidase subunit 7A1, mitochondrial from Mus musculus (Mouse).